We begin with the raw amino-acid sequence, 758 residues long: GPI ethanolamine phosphate transferase 2 (758 aa).

Residues Asn28, Asn77, and Asn178 are each glycosylated (N-linked (GlcNAc...) asparagine). 3 helical membrane-spanning segments follow: residues 405-425 (LVAI…FRNL), 431-451 (LLAF…SSFI), and 455-472 (HVIW…QLLN). Asn493 carries N-linked (GlcNAc...) asparagine glycosylation. 6 helical membrane-spanning segments follow: residues 533 to 553 (PSPI…MPII), 561 to 581 (PIIA…LLLI), 598 to 618 (LFIL…YDIW), 667 to 687 (IFAV…WWCL), 698 to 718 (VKTF…SCFI), and 733 to 753 (LLYN…ISTI).

The protein belongs to the PIGG/PIGN/PIGO family. PIGG subfamily.

It localises to the endoplasmic reticulum membrane. It participates in glycolipid biosynthesis; glycosylphosphatidylinositol-anchor biosynthesis. Its function is as follows. Ethanolamine phosphate transferase involved in glycosylphosphatidylinositol-anchor biosynthesis. Transfers ethanolamine phosphate to the GPI second mannose. The sequence is that of GPI ethanolamine phosphate transferase 2 (las21) from Schizosaccharomyces pombe (strain 972 / ATCC 24843) (Fission yeast).